The following is a 365-amino-acid chain: Tubulin-like protein CetZ (365 aa).

GTP-binding positions include 10-14 (QCGTK), 103-105 (GTG), Glu-136, Asn-163, and Asn-181.

Belongs to the CetZ family.

The protein resides in the cytoplasm. Involved in cell shape control. This Pyrococcus horikoshii (strain ATCC 700860 / DSM 12428 / JCM 9974 / NBRC 100139 / OT-3) protein is Tubulin-like protein CetZ.